The chain runs to 803 residues: Lon protease (803 aa).

Residues 9 to 202 enclose the Lon N-terminal domain; sequence MPVLPLRDVV…YLLGMMESEA (194 aa). Residue 356–363 participates in ATP binding; the sequence is GPPGVGKT. The Lon proteolytic domain occupies 592–773; that stretch reads QNRIGEVTGL…DEVLGFALEN (182 aa). Catalysis depends on residues Ser679 and Lys722.

It belongs to the peptidase S16 family. In terms of assembly, homohexamer. Organized in a ring with a central cavity.

Its subcellular location is the cytoplasm. The enzyme catalyses Hydrolysis of proteins in presence of ATP.. ATP-dependent serine protease that mediates the selective degradation of mutant and abnormal proteins as well as certain short-lived regulatory proteins. Required for cellular homeostasis and for survival from DNA damage and developmental changes induced by stress. Degrades polypeptides processively to yield small peptide fragments that are 5 to 10 amino acids long. Binds to DNA in a double-stranded, site-specific manner. This is Lon protease from Haemophilus influenzae (strain ATCC 51907 / DSM 11121 / KW20 / Rd).